Consider the following 672-residue polypeptide: ATP-dependent zinc metalloprotease FtsH 1 (672 aa).

Residues 1 to 22 (MKKDSESNSSDKSNKEELSTGR) form a disordered region. At 1 to 23 (MKKDSESNSSDKSNKEELSTGRR) the chain is on the cytoplasmic side. Residues 24-44 (GGNPMIIALVITVLAAMLFFN) traverse the membrane as a helical segment. Residues 45 to 141 (QPEPSSLISA…KFSPPDNTAA (97 aa)) lie on the Periplasmic side of the membrane. The helical transmembrane segment at 142–162 (ILNLLILVGLPLAIFFFIFMM) threads the bilayer. Residues 163-672 (IRRTRNDMMG…TSNASARRED (510 aa)) lie on the Cytoplasmic side of the membrane. ATP is bound at residue 237–244 (GPPGTGKT). A Zn(2+)-binding site is contributed by H458. Residue E459 is part of the active site. H462 and D534 together coordinate Zn(2+). The segment at 642-672 (RLGDEEGKVEQIMAPEGAAERTSNASARRED) is disordered. A compositionally biased stretch (polar residues) spans 662-672 (RTSNASARRED).

This sequence in the central section; belongs to the AAA ATPase family. It in the C-terminal section; belongs to the peptidase M41 family. As to quaternary structure, homohexamer. It depends on Zn(2+) as a cofactor.

The protein resides in the cell inner membrane. Functionally, acts as a processive, ATP-dependent zinc metallopeptidase for both cytoplasmic and membrane proteins. Plays a role in the quality control of integral membrane proteins. The sequence is that of ATP-dependent zinc metalloprotease FtsH 1 from Rhodopirellula baltica (strain DSM 10527 / NCIMB 13988 / SH1).